The chain runs to 49 residues: uncharacterized protein (49 aa).

This is an uncharacterized protein from Archaeoglobus fulgidus (strain ATCC 49558 / DSM 4304 / JCM 9628 / NBRC 100126 / VC-16).